Reading from the N-terminus, the 184-residue chain is Ribosome-recycling factor (184 aa).

Belongs to the RRF family.

It localises to the cytoplasm. Its function is as follows. Responsible for the release of ribosomes from messenger RNA at the termination of protein biosynthesis. May increase the efficiency of translation by recycling ribosomes from one round of translation to another. This Aquifex aeolicus (strain VF5) protein is Ribosome-recycling factor.